A 374-amino-acid polypeptide reads, in one-letter code: Severin (374 aa).

Gelsolin-like repeat units lie at residues 58–109, 180–220, and 278–369; these read FTLE…DEYG, EGKT…KCSA, and EVIK…SFLK.

The protein belongs to the villin/gelsolin family.

In terms of biological role, severin blocks the ends of F-actin and causes the fragmentation and depolymerization of actin filaments. This severin binds stably with actin both in a Ca(2+) dependent and a Ca(2+) independent manner. The chain is Severin (AG8) from Echinococcus granulosus (Hydatid tapeworm).